A 623-amino-acid chain; its full sequence is ATP-dependent lipid A-core flippase (623 aa).

A run of 5 helical transmembrane segments spans residues 66–86, 103–123, 190–210, 290–310, and 317–337; these read LVLAVLLMAGAAATQPTLAVI, VWFLPLAVVGLILLRGICNFF, LVVIALIGVLLYMSWALTLII, LTPLTQVCISVAVGAVIAVAL, and ALTVGSFASFMAALAQIFDPI. The ABC transmembrane type-1 domain occupies 67 to 349; sequence VLAVLLMAGA…LTNLAGKMQK (283 aa). In terms of domain architecture, ABC transporter spans 382–618; sequence VEFRAVSHRF…NGLYASLYNM (237 aa). Residue 416–423 coordinates ATP; the sequence is GRSGSGKT.

It belongs to the ABC transporter superfamily. Lipid exporter (TC 3.A.1.106) family. Homodimer.

Its subcellular location is the cell inner membrane. It catalyses the reaction ATP + H2O + lipid A-core oligosaccharideSide 1 = ADP + phosphate + lipid A-core oligosaccharideSide 2.. In terms of biological role, involved in lipopolysaccharide (LPS) biosynthesis. Translocates lipid A-core from the inner to the outer leaflet of the inner membrane. Transmembrane domains (TMD) form a pore in the inner membrane and the ATP-binding domain (NBD) is responsible for energy generation. The protein is ATP-dependent lipid A-core flippase of Bordetella pertussis (strain Tohama I / ATCC BAA-589 / NCTC 13251).